Consider the following 195-residue polypeptide: FMN-dependent NADH:quinone oxidoreductase (195 aa).

FMN is bound by residues Ser10, Ser16 to Ser18, and Met91 to Phe94.

Belongs to the azoreductase type 1 family. As to quaternary structure, homodimer. The cofactor is FMN.

It carries out the reaction 2 a quinone + NADH + H(+) = 2 a 1,4-benzosemiquinone + NAD(+). It catalyses the reaction N,N-dimethyl-1,4-phenylenediamine + anthranilate + 2 NAD(+) = 2-(4-dimethylaminophenyl)diazenylbenzoate + 2 NADH + 2 H(+). Quinone reductase that provides resistance to thiol-specific stress caused by electrophilic quinones. In terms of biological role, also exhibits azoreductase activity. Catalyzes the reductive cleavage of the azo bond in aromatic azo compounds to the corresponding amines. The polypeptide is FMN-dependent NADH:quinone oxidoreductase (Aeromonas salmonicida (strain A449)).